Reading from the N-terminus, the 620-residue chain is Chaperone protein HscA homolog (620 aa).

The protein belongs to the heat shock protein 70 family.

Chaperone involved in the maturation of iron-sulfur cluster-containing proteins. Has a low intrinsic ATPase activity which is markedly stimulated by HscB. The polypeptide is Chaperone protein HscA homolog (Shewanella loihica (strain ATCC BAA-1088 / PV-4)).